The chain runs to 243 residues: 1-(5-phosphoribosyl)-5-[(5-phosphoribosylamino)methylideneamino] imidazole-4-carboxamide isomerase (243 aa).

Asp-8 functions as the Proton acceptor in the catalytic mechanism. Asp-129 functions as the Proton donor in the catalytic mechanism.

The protein belongs to the HisA/HisF family.

The protein resides in the cytoplasm. It catalyses the reaction 1-(5-phospho-beta-D-ribosyl)-5-[(5-phospho-beta-D-ribosylamino)methylideneamino]imidazole-4-carboxamide = 5-[(5-phospho-1-deoxy-D-ribulos-1-ylimino)methylamino]-1-(5-phospho-beta-D-ribosyl)imidazole-4-carboxamide. Its pathway is amino-acid biosynthesis; L-histidine biosynthesis; L-histidine from 5-phospho-alpha-D-ribose 1-diphosphate: step 4/9. The protein is 1-(5-phosphoribosyl)-5-[(5-phosphoribosylamino)methylideneamino] imidazole-4-carboxamide isomerase of Geobacter sp. (strain M21).